A 139-amino-acid chain; its full sequence is NAD(P) transhydrogenase subunit alpha part 2 (139 aa).

3 helical membrane passes run 49–69, 78–98, and 107–127; these read FWWL…VVWS, LMGV…IATG, and VLGF…FIVT.

As to quaternary structure, complex of an alpha and a beta chain; in Rhodospirillum, the alpha chain seems to be made of two subunits.

The protein resides in the cell inner membrane. The enzyme catalyses NAD(+) + NADPH + H(+)(in) = NADH + NADP(+) + H(+)(out). Its function is as follows. The transhydrogenation between NADH and NADP is coupled to respiration and ATP hydrolysis and functions as a proton pump across the membrane. The protein is NAD(P) transhydrogenase subunit alpha part 2 (pntAB) of Rhodospirillum rubrum (strain ATCC 11170 / ATH 1.1.1 / DSM 467 / LMG 4362 / NCIMB 8255 / S1).